We begin with the raw amino-acid sequence, 98 residues long: UPF0235 protein CCNA_03737 (98 aa).

Belongs to the UPF0235 family.

In Caulobacter vibrioides (strain NA1000 / CB15N) (Caulobacter crescentus), this protein is UPF0235 protein CCNA_03737.